The sequence spans 229 residues: Glutathione S-transferase 1 (229 aa).

Residues 2–86 (AQFTLWSHAH…YLADKYDTER (85 aa)) form the GST N-terminal domain. Residues 93–229 (DHPEYYKVIQ…FEERSKALDN (137 aa)) enclose the GST C-terminal domain.

Belongs to the GST superfamily.

It carries out the reaction RX + glutathione = an S-substituted glutathione + a halide anion + H(+). Its function is as follows. Involved in the oxidative stress response and detoxification. This chain is Glutathione S-transferase 1 (gst1), found in Schizosaccharomyces pombe (strain 972 / ATCC 24843) (Fission yeast).